An 88-amino-acid chain; its full sequence is MGIARILSAVLFLSVLFVVTFPALLSADHHDGRIDTCRLPSDRGRCKASFERWYFNGRTCAKFIYGGCGGNGNKFPTQEACMKRCGKA.

A signal peptide spans 1-27; the sequence is MGIARILSAVLFLSVLFVVTFPALLSA. A propeptide spanning residues 28–33 is cleaved from the precursor; the sequence is DHHDGR. Residues 37–85 enclose the BPTI/Kunitz inhibitor domain; it reads CRLPSDRGRCKASFERWYFNGRTCAKFIYGGCGGNGNKFPTQEACMKRC. 3 cysteine pairs are disulfide-bonded: C37–C85, C46–C68, and C60–C81.

It belongs to the venom Kunitz-type family. 02 (native) subfamily. Expressed by the venom gland.

It localises to the secreted. Serine protease inhibitor that inhibits trypsin at a molar ratio of 1:1. In Cyriopagopus schmidti (Chinese bird spider), this protein is Kunitz-type kappaPI-theraphotoxin-Hs1b.